We begin with the raw amino-acid sequence, 63 residues long: Protein DsrB (63 aa).

It belongs to the DsrB family.

In Yersinia pseudotuberculosis serotype O:1b (strain IP 31758), this protein is Protein DsrB.